The chain runs to 428 residues: GTPase Obg (428 aa).

The Obg domain occupies 1–158 (MFVDQVKIYV…RDVILELKVL (158 aa)). Residues 159–329 (ADVGLVGFPS…LLFEVANLLE (171 aa)) enclose the OBG-type G domain. GTP is bound by residues 165 to 172 (GFPSVGKS), 190 to 194 (FTTIV), 212 to 215 (DLPG), 282 to 285 (NKMD), and 310 to 312 (SAV). Mg(2+) is bound by residues serine 172 and threonine 192. One can recognise an OCT domain in the interval 350–428 (KLETEGVKFD…ILEYEFEFID (79 aa)).

The protein belongs to the TRAFAC class OBG-HflX-like GTPase superfamily. OBG GTPase family. As to quaternary structure, monomer. It depends on Mg(2+) as a cofactor.

The protein resides in the cytoplasm. Its function is as follows. An essential GTPase which binds GTP, GDP and possibly (p)ppGpp with moderate affinity, with high nucleotide exchange rates and a fairly low GTP hydrolysis rate. Plays a role in control of the cell cycle, stress response, ribosome biogenesis and in those bacteria that undergo differentiation, in morphogenesis control. This is GTPase Obg from Bacillus cereus (strain Q1).